The chain runs to 127 residues: Holo-[acyl-carrier-protein] synthase (127 aa).

Mg(2+) contacts are provided by Asp8 and Glu56.

Belongs to the P-Pant transferase superfamily. AcpS family. Mg(2+) serves as cofactor.

The protein resides in the cytoplasm. The catalysed reaction is apo-[ACP] + CoA = holo-[ACP] + adenosine 3',5'-bisphosphate + H(+). In terms of biological role, transfers the 4'-phosphopantetheine moiety from coenzyme A to a Ser of acyl-carrier-protein. The sequence is that of Holo-[acyl-carrier-protein] synthase from Caldanaerobacter subterraneus subsp. tengcongensis (strain DSM 15242 / JCM 11007 / NBRC 100824 / MB4) (Thermoanaerobacter tengcongensis).